The sequence spans 48 residues: Large ribosomal subunit protein bL33B (48 aa).

This sequence belongs to the bacterial ribosomal protein bL33 family.

The polypeptide is Large ribosomal subunit protein bL33B (rpmG2) (Mycoplasma genitalium (strain ATCC 33530 / DSM 19775 / NCTC 10195 / G37) (Mycoplasmoides genitalium)).